The primary structure comprises 95 residues: Co-chaperonin GroES (95 aa).

This sequence belongs to the GroES chaperonin family. As to quaternary structure, heptamer of 7 subunits arranged in a ring. Interacts with the chaperonin GroEL.

The protein localises to the cytoplasm. In terms of biological role, together with the chaperonin GroEL, plays an essential role in assisting protein folding. The GroEL-GroES system forms a nano-cage that allows encapsulation of the non-native substrate proteins and provides a physical environment optimized to promote and accelerate protein folding. GroES binds to the apical surface of the GroEL ring, thereby capping the opening of the GroEL channel. In Bordetella bronchiseptica (strain ATCC BAA-588 / NCTC 13252 / RB50) (Alcaligenes bronchisepticus), this protein is Co-chaperonin GroES.